The following is a 404-amino-acid chain: Cysteine desulfurase IscS (404 aa).

Pyridoxal 5'-phosphate contacts are provided by residues 75 to 76 (AT), N155, Q183, and 203 to 205 (SGH). The residue at position 206 (K206) is an N6-(pyridoxal phosphate)lysine. A pyridoxal 5'-phosphate-binding site is contributed by T243. Catalysis depends on C328, which acts as the Cysteine persulfide intermediate. Residue C328 coordinates [2Fe-2S] cluster.

It belongs to the class-V pyridoxal-phosphate-dependent aminotransferase family. NifS/IscS subfamily. In terms of assembly, homodimer. Forms a heterotetramer with IscU, interacts with other sulfur acceptors. Requires pyridoxal 5'-phosphate as cofactor.

It localises to the cytoplasm. The enzyme catalyses (sulfur carrier)-H + L-cysteine = (sulfur carrier)-SH + L-alanine. The protein operates within cofactor biosynthesis; iron-sulfur cluster biosynthesis. In terms of biological role, master enzyme that delivers sulfur to a number of partners involved in Fe-S cluster assembly, tRNA modification or cofactor biosynthesis. Catalyzes the removal of elemental sulfur atoms from cysteine to produce alanine. Functions as a sulfur delivery protein for Fe-S cluster synthesis onto IscU, an Fe-S scaffold assembly protein, as well as other S acceptor proteins. This Pectobacterium carotovorum subsp. carotovorum (strain PC1) protein is Cysteine desulfurase IscS.